We begin with the raw amino-acid sequence, 431 residues long: tRNA (adenine(37)-N6)-methyltransferase (431 aa).

Positions 30–168 (TEPIGYLESC…YIADYDSPQN (139 aa)) constitute a TsaA-like domain. Residues 47-49 (PRQ), 90-91 (HK), Arg-117, Leu-127, and 148-151 (IDGT) contribute to the S-adenosyl-L-methionine site. Positions 196–242 (LSGRGKVQPRQSTKERPKCLEDRTSGENSQKSRDMSEIQHTLPEDRE) are disordered. Residues 207 to 242 (STKERPKCLEDRTSGENSQKSRDMSEIQHTLPEDRE) are compositionally biased toward basic and acidic residues.

Belongs to the tRNA methyltransferase O family.

It catalyses the reaction N(6)-L-threonylcarbamoyladenosine(37) in tRNA + S-adenosyl-L-methionine = N(6)-methyl,N(6)-L-threonylcarbamoyladenosine(37) in tRNA + S-adenosyl-L-homocysteine + H(+). Its function is as follows. S-adenosyl-L-methionine-dependent methyltransferase responsible for the addition of the methyl group in the formation of N6-methyl-N6-threonylcarbamoyladenosine at position 37 (m(6)t(6)A37) of the tRNA anticodon loop of tRNA(Ser)(GCU). The methyl group of m(6)t(6)A37 may improve the efficiency of the tRNA decoding ability. May bind to tRNA. In Mus musculus (Mouse), this protein is tRNA (adenine(37)-N6)-methyltransferase.